We begin with the raw amino-acid sequence, 346 residues long: Phosphoribosylformylglycinamidine cyclo-ligase (346 aa).

Belongs to the AIR synthase family.

The protein resides in the cytoplasm. The enzyme catalyses 2-formamido-N(1)-(5-O-phospho-beta-D-ribosyl)acetamidine + ATP = 5-amino-1-(5-phospho-beta-D-ribosyl)imidazole + ADP + phosphate + H(+). It functions in the pathway purine metabolism; IMP biosynthesis via de novo pathway; 5-amino-1-(5-phospho-D-ribosyl)imidazole from N(2)-formyl-N(1)-(5-phospho-D-ribosyl)glycinamide: step 2/2. In Vibrio campbellii (strain ATCC BAA-1116), this protein is Phosphoribosylformylglycinamidine cyclo-ligase.